We begin with the raw amino-acid sequence, 543 residues long: RuBisCO large subunit-binding protein subunit alpha, chloroplastic (543 aa).

The transit peptide at 1-2 directs the protein to the chloroplast; the sequence is GA.

This sequence belongs to the chaperonin (HSP60) family. Oligomer of probably six alpha and six beta subunits.

It localises to the plastid. The protein localises to the chloroplast. This protein binds RuBisCO small and large subunits and is implicated in the assembly of the enzyme oligomer. The polypeptide is RuBisCO large subunit-binding protein subunit alpha, chloroplastic (Triticum aestivum (Wheat)).